The following is a 166-amino-acid chain: Endoribonuclease YbeY (166 aa).

Zn(2+)-binding residues include H131, H135, and H141.

It belongs to the endoribonuclease YbeY family. It depends on Zn(2+) as a cofactor.

Its subcellular location is the cytoplasm. Functionally, single strand-specific metallo-endoribonuclease involved in late-stage 70S ribosome quality control and in maturation of the 3' terminus of the 16S rRNA. The polypeptide is Endoribonuclease YbeY (Dehalococcoides mccartyi (strain CBDB1)).